Here is a 660-residue protein sequence, read N- to C-terminus: Sodium/nucleoside cotransporter 2 (660 aa).

Residue serine 46 is modified to Phosphoserine. A run of 14 helical transmembrane segments spans residues 82–102 (ILLG…CILN), 106–125 (ALAL…CHFL), 150–168 (KRVF…LALD), 174–194 (EQLI…ACSK), 202–222 (RTVF…IRTE), 235–255 (IQIF…DTLV), 262–282 (QSLP…YLGL), 297–316 (TMGT…FVGM), 338–357 (VMTG…FISF), 364–383 (LISA…KLVY), 425–445 (VAAN…TLSW), 456–476 (SFQV…GVQW), 531–551 (TTFS…LGGL), and 569–589 (ALFT…ILYV).

It belongs to the concentrative nucleoside transporter (CNT) (TC 2.A.41) family.

The protein localises to the membrane. Its subcellular location is the apicolateral cell membrane. It catalyses the reaction adenosine(out) + Na(+)(out) = adenosine(in) + Na(+)(in). The catalysed reaction is inosine(out) + Na(+)(out) = inosine(in) + Na(+)(in). It carries out the reaction guanosine(out) + Na(+)(out) = guanosine(in) + Na(+)(in). The enzyme catalyses uridine(out) + Na(+)(out) = uridine(in) + Na(+)(in). Its function is as follows. Sodium-dependent and purine-selective transporter. Exhibits the transport characteristics of the nucleoside transport system cif or N1 subtype (N1/cif) (selective for purine nucleosides and uridine). Plays a critical role in specific uptake and salvage of purine nucleosides in kidney and other tissues. May contribute to regulate the transport of organic compounds in testes across the blood-testis-barrier. The polypeptide is Sodium/nucleoside cotransporter 2 (Slc28a2) (Mus musculus (Mouse)).